A 983-amino-acid polypeptide reads, in one-letter code: MSVPTKRRLSFDESTNKRFLNGTHSTENNTSNIEVDEDYGSDGSEQIFDLPATTNNNQWQETITKVVNAVVSIQFTHVSNFDTETSLVSEATGFVVDATRGLILTNRHVVGPGPFCGYVVFDNHEEAVVKPIYRDPVHDFGFLQFDPKEVKYLQLTQLELKPDLAKVGTEIRVVGNDAGEKLSILAGFISRLDRNAPEYGSLTYNDFNTEYIQAAASASGGSSGSPVVNEDGDVVALQAGGSTEASTDFFLPIYRPLRALQCIQKKQPITRGDIQVEWQLKPYDECRRLGLTPEAEARARKLFPNKIGLLVAELVLPQGQADGLIKEGDTLISIDDIDISTFIKVDEILDENVGNELKFVIQRGGEVITQMIKIGDLHSITPDRYVDVGGASFNNLSYQVARCYCIPVKGVFINDASGSFEFASYEKSGWLLETVDDMPTPDLDTLIEVMKMIPDCRRVPITYRHVSDLHTENIQIIYIERHWQSSFRLAVRNDTTGLWDFTDLQEKPLPPLSHEPQNAKFIDIPFSDETRSGCSSLVRSFVQVRLIAPVPMDSYPYRKEICYGVVVDSVNGYVLVSRRFVPHDMCDIFLIFAESIDVPAKVVFLHPNQNYAILKYDPSLVLADVKTPKFGDKPLKRGEKSYFIGYNYNLRLVTDDVKISGVSSLNIPPASLSPRYRGTNLECILLDSKISVECDSGVLADDDGTVRAFWITYLGEATCDQGSDRMYRMGLDVTDVLSVIEKLKVNEIPKQLRLLEAEFTSVTILQGRTRGVSQEWINKFEEVCEDEIKFLAVERVSAPTLHQEKNPLKAGDIILSVNDIIVKNMRDLKPMFTEQELKFRIIRQKKETEIVVPTIDTTTINTSHVVFWSGAIIQAPHYAVRQLMERVPSEVYVTRKSAGGPAHQYGIATNSFITHVNDVETKDLVSLMKVVKDIPDNTYIKLRLMSFDNVPIAISLKTNYHYFPTSELKKKEGSDEWIEIEHK.

The disordered stretch occupies residues 1 to 40 (MSVPTKRRLSFDESTNKRFLNGTHSTENNTSNIEVDEDYG). Over residues 22–33 (GTHSTENNTSNI) the composition is skewed to polar residues. Residues 59–260 (WQETITKVVN…LPIYRPLRAL (202 aa)) form a serine protease region. Active-site charge relay system residues include H108, D139, and S222. 2 PDZ domains span residues 287-365 (RRLG…QRGG) and 867-948 (FWSG…MSFD).

This sequence belongs to the peptidase S1C family.

It is found in the nucleus. In terms of biological role, nuclear serine protease which mediates apoptosis. The polypeptide is Pro-apoptotic serine protease NMA111 (NMA111) (Scheffersomyces stipitis (strain ATCC 58785 / CBS 6054 / NBRC 10063 / NRRL Y-11545) (Yeast)).